The primary structure comprises 926 residues: Tyrosine-protein phosphatase non-receptor type 4 (926 aa).

Positions 29 to 312 (VVCNILLLDN…EHHTFFRLDR (284 aa)) constitute an FERM domain. 2 disordered regions span residues 380-412 (DDRLETQSLPSRSPPGTPNHRNSTFTQEGTRLR) and 430-475 (EVFV…KNSW). Polar residues-rich tracts occupy residues 398 to 408 (NHRNSTFTQEG) and 430 to 456 (EVFVNQRSPSSTQANSIVLESSPSQET). Position 474 is a phosphoserine (serine 474). Residues 517–589 (LIRMKPDENG…DQVVLFIKAS (73 aa)) form the PDZ domain. Positions 655 to 911 (VLTQFDQLYR…RFVCEAILKV (257 aa)) constitute a Tyrosine-protein phosphatase domain. Substrate-binding positions include aspartate 820, 852 to 858 (CSAGIGR), and glutamine 896. Catalysis depends on cysteine 852, which acts as the Phosphocysteine intermediate.

The protein belongs to the protein-tyrosine phosphatase family. Non-receptor class subfamily. Interacts with MAPK12 (via C-terminus); this interaction abolishes PTPN4 catalytic autoinhibition and thus activates the phosphatase activity. In terms of assembly, (Microbial infection) Interacts with attenuated rabies virus protein G; this interaction is required for virally-induced apoptosis. Post-translationally, highly phosphorylated on serine and threonine residues but not on tyrosines. In terms of processing, cleaved and activated by calpain I/CAPN1.

It is found in the cell membrane. The protein localises to the cytoplasm. The protein resides in the cytoskeleton. It carries out the reaction O-phospho-L-tyrosyl-[protein] + H2O = L-tyrosyl-[protein] + phosphate. Functionally, phosphatase that plays a role in immunity, learning, synaptic plasticity or cell homeostasis. Regulates neuronal cell homeostasis by protecting neurons against apoptosis. Negatively regulates TLR4-induced interferon beta production by dephosphorylating adapter TICAM2 and inhibiting subsequent TRAM-TRIF interaction. Also dephosphorylates the immunoreceptor tyrosine-based activation motifs/ITAMs of the TCR zeta subunit and thereby negatively regulates TCR-mediated signaling pathway. May act at junctions between the membrane and the cytoskeleton. In Homo sapiens (Human), this protein is Tyrosine-protein phosphatase non-receptor type 4 (PTPN4).